A 103-amino-acid polypeptide reads, in one-letter code: Zinc-containing ferredoxin (103 aa).

The tract at residues 1-36 (GIDPNYRTSKPVVGDHSGHKIYGPVESPKVLGVHGT) is N-terminal extension. His19 contributes to the Zn(2+) binding site. Lys29 bears the N6-methyllysine mark. His34 contributes to the Zn(2+) binding site. 2 consecutive 4Fe-4S ferredoxin-type domains span residues 35-65 (GTIV…WYET) and 74-103 (KADP…VKPP). [3Fe-4S] cluster-binding residues include Cys45 and Cys51. Cys55 is a binding site for [4Fe-4S] cluster. Asp76 contributes to the Zn(2+) binding site. 3 residues coordinate [4Fe-4S] cluster: Cys83, Cys86, and Cys89. Cys93 is a binding site for [3Fe-4S] cluster.

[3Fe-4S] cluster serves as cofactor. It depends on [4Fe-4S] cluster as a cofactor. Requires Zn(2+) as cofactor.

Its function is as follows. Ferredoxins are iron-sulfur proteins that transfer electrons in a wide variety of metabolic reactions. In Sulfolobus acidocaldarius (strain ATCC 33909 / DSM 639 / JCM 8929 / NBRC 15157 / NCIMB 11770), this protein is Zinc-containing ferredoxin (zfx).